We begin with the raw amino-acid sequence, 72 residues long: Cell division protein ZapB (72 aa).

Residues 2-72 are a coiled coil; that stretch reads SLEILDQLEG…RSLLGQIDNV (71 aa). The segment at 34–57 is disordered; sequence NQQAQQANDELRSENEQLKGEHNN. The span at 42–57 shows a compositional bias: basic and acidic residues; sequence DELRSENEQLKGEHNN.

It belongs to the ZapB family. As to quaternary structure, homodimer. The ends of the coiled-coil dimer bind to each other, forming polymers. Interacts with FtsZ.

It is found in the cytoplasm. Functionally, non-essential, abundant cell division factor that is required for proper Z-ring formation. It is recruited early to the divisome by direct interaction with FtsZ, stimulating Z-ring assembly and thereby promoting cell division earlier in the cell cycle. Its recruitment to the Z-ring requires functional FtsA or ZipA. This chain is Cell division protein ZapB, found in Mannheimia succiniciproducens (strain KCTC 0769BP / MBEL55E).